Reading from the N-terminus, the 305-residue chain is ATP synthase gamma chain (305 aa).

The protein belongs to the ATPase gamma chain family. In terms of assembly, F-type ATPases have 2 components, CF(1) - the catalytic core - and CF(0) - the membrane proton channel. CF(1) has five subunits: alpha(3), beta(3), gamma(1), delta(1), epsilon(1). CF(0) has three main subunits: a, b and c.

The protein resides in the cell membrane. In terms of biological role, produces ATP from ADP in the presence of a proton gradient across the membrane. The gamma chain is believed to be important in regulating ATPase activity and the flow of protons through the CF(0) complex. This Streptomyces coelicolor (strain ATCC BAA-471 / A3(2) / M145) protein is ATP synthase gamma chain.